Consider the following 372-residue polypeptide: Integral membrane protein GPR137B (372 aa).

The Lumenal segment spans residues 1–32 (MESPAWDATKNDSLPPTLTPAVPPYVKLGLTT). Asn-11 carries N-linked (GlcNAc...) asparagine glycosylation. The chain crosses the membrane as a helical span at residues 33–53 (VYTIFYLLLFAFVYVQLWLVL). Over 54-64 (HYKHKRFSYQT) the chain is Cytoplasmic. Residues 65-85 (VFLFLCLLWASLRAVLFSFYF) form a helical membrane-spanning segment. At 86 to 93 (RNFVEANR) the chain is on the lumenal side. The chain crosses the membrane as a helical span at residues 94–114 (LGAFTFWLLYCFPVCLQFFTL). The Cytoplasmic portion of the chain corresponds to 115-144 (TLMNLYFARVIYKAKSKYLPELIKYRLPLY). The chain crosses the membrane as a helical span at residues 145 to 165 (LAFLVISLLFLVVNLTCAILV). The Lumenal portion of the chain corresponds to 166-173 (KTDYAETK). The helical transmembrane segment at 174-194 (VIVSIRVAINDTLFVLCAVSL) threads the bilayer. Residues 195 to 222 (SVCLYKISKMSLAGVYLESKGSSVCQVT) lie on the Cytoplasmic side of the membrane. Residues 223 to 243 (CIGVTVILLYTSRACYNLVVL) form a helical membrane-spanning segment. The Lumenal segment spans residues 244-276 (SLSDSRYSSFDYDWYNVSDQADLKCKLGDAGYV). A glycan (N-linked (GlcNAc...) asparagine) is linked at Asn-259. Residues 277–297 (VFGIILFIWELFPTSLVVYFF) traverse the membrane as a helical segment. Residues 298–372 (RVRNSAQDMT…QTGSLQRDST (75 aa)) lie on the Cytoplasmic side of the membrane.

The protein belongs to the GPR137 family.

The protein resides in the lysosome membrane. In terms of biological role, lysosomal integral membrane protein that regulates the localization and activity of mTORC1, a signaling complex promoting cell growth in response to growth factors, energy levels, and amino acids. Interacts with Rag GTPases and increases the lysosomial localization and activity of Rag GTPases and thereby regulates mTORC1 translocation and activity in lysosome. Involved in the regulation of lysosomal morphology and autophagy. Also acts as a negative regulator of osteoclast activity. Also acts as a negative regulator of osteoclast activity. The polypeptide is Integral membrane protein GPR137B (gpr137b) (Xenopus laevis (African clawed frog)).